The primary structure comprises 361 residues: Phosphoserine aminotransferase (361 aa).

Residue R42 participates in L-glutamate binding. Pyridoxal 5'-phosphate-binding positions include 76–77, W102, T153, D173, and Q196; that span reads AR. K197 carries the post-translational modification N6-(pyridoxal phosphate)lysine. Residue 238–239 participates in pyridoxal 5'-phosphate binding; it reads NT.

The protein belongs to the class-V pyridoxal-phosphate-dependent aminotransferase family. SerC subfamily. Homodimer. Pyridoxal 5'-phosphate serves as cofactor.

It is found in the cytoplasm. The enzyme catalyses O-phospho-L-serine + 2-oxoglutarate = 3-phosphooxypyruvate + L-glutamate. It catalyses the reaction 4-(phosphooxy)-L-threonine + 2-oxoglutarate = (R)-3-hydroxy-2-oxo-4-phosphooxybutanoate + L-glutamate. Its pathway is amino-acid biosynthesis; L-serine biosynthesis; L-serine from 3-phospho-D-glycerate: step 2/3. It participates in cofactor biosynthesis; pyridoxine 5'-phosphate biosynthesis; pyridoxine 5'-phosphate from D-erythrose 4-phosphate: step 3/5. In terms of biological role, catalyzes the reversible conversion of 3-phosphohydroxypyruvate to phosphoserine and of 3-hydroxy-2-oxo-4-phosphonooxybutanoate to phosphohydroxythreonine. This is Phosphoserine aminotransferase from Pectobacterium carotovorum subsp. carotovorum (strain PC1).